Reading from the N-terminus, the 893-residue chain is Genome polyprotein 2 (893 aa).

The 121-residue stretch at 109 to 229 (TAEFKSGFCY…GCEYMLYPVG (121 aa)) folds into the Peptidase C6 domain. Catalysis depends on for helper component proteinase activity residues cysteine 117 and histidine 189. Positions 502-539 (WVTLNSGDDDDDQSGGGGGGPQTPGGQPPVPHTRGTHQ) are disordered. Over residues 515-524 (SGGGGGGPQT) the composition is skewed to gly residues.

The protein belongs to the bymoviruses polyprotein 2 family. In terms of processing, the viral RNA2 of bymoviruses is expressed as a single polyprotein which undergoes post-translational proteolytic processing resulting in the production of at least two individual proteins. The HC-pro cleaves its C-terminus autocatalytically (Potential).

The catalysed reaction is Hydrolyzes a Gly-|-Gly bond at its own C-terminus, commonly in the sequence -Tyr-Xaa-Val-Gly-|-Gly, in the processing of the potyviral polyprotein.. This chain is Genome polyprotein 2 (RNA2), found in Barley mild mosaic virus (strain ASL) (BaMMV).